A 416-amino-acid polypeptide reads, in one-letter code: (S)-ureidoglycine--glyoxylate transaminase (416 aa).

Lysine 198 is modified (N6-(pyridoxal phosphate)lysine).

Belongs to the class-V pyridoxal-phosphate-dependent aminotransferase family. As to quaternary structure, homodimer. The cofactor is pyridoxal 5'-phosphate.

The enzyme catalyses (S)-2-ureidoglycine + glyoxylate = N-carbamoyl-2-oxoglycine + glycine. It participates in nitrogen metabolism; (S)-allantoin degradation. Functionally, catalyzes the transamination between an unstable intermediate ((S)-ureidoglycine) and the end product of purine catabolism (glyoxylate) to yield oxalurate and glycine. Glyoxylate is the preferred substrate, but other amino-group acceptors can be used. This is (S)-ureidoglycine--glyoxylate transaminase from Bacillus subtilis (strain 168).